The sequence spans 367 residues: tRNA uridine(34) hydroxylase (367 aa).

In terms of domain architecture, Rhodanese spans 159 to 249; that stretch reads EDKNSIVVDV…GIISYAHEIS (91 aa). Cysteine 213 acts as the Cysteine persulfide intermediate in catalysis.

It belongs to the TrhO family.

It catalyses the reaction uridine(34) in tRNA + AH2 + O2 = 5-hydroxyuridine(34) in tRNA + A + H2O. Its function is as follows. Catalyzes oxygen-dependent 5-hydroxyuridine (ho5U) modification at position 34 in tRNAs. The protein is tRNA uridine(34) hydroxylase of Leptospira borgpetersenii serovar Hardjo-bovis (strain L550).